A 97-amino-acid polypeptide reads, in one-letter code: YcgL domain-containing protein Psyr_1564 (97 aa).

The region spanning 3 to 87 (RICSIYRSPK…AEDDYIEHLP (85 aa)) is the YcgL domain.

The protein is YcgL domain-containing protein Psyr_1564 of Pseudomonas syringae pv. syringae (strain B728a).